The chain runs to 252 residues: uncharacterized protein (252 aa).

Its subcellular location is the plastid. It localises to the chloroplast. This is an uncharacterized protein from Guillardia theta (Cryptophyte).